The chain runs to 308 residues: Probable dimethyladenosine transferase (308 aa).

Positions 1 to 11 (MGKTSKVKKTK) are enriched in basic residues. Residues 1–24 (MGKTSKVKKTKAGSSTGNVQSLPF) form a disordered region. Residues 12–24 (AGSSTGNVQSLPF) show a composition bias toward polar residues. S-adenosyl-L-methionine contacts are provided by His-31, Leu-33, Gly-58, Glu-79, Asp-107, and Asn-122.

This sequence belongs to the class I-like SAM-binding methyltransferase superfamily. rRNA adenine N(6)-methyltransferase family. In terms of assembly, part of the small subunit (SSU) processome, composed of more than 70 proteins and the RNA chaperone small nucleolar RNA (snoRNA) U3.

It localises to the nucleus. The protein localises to the nucleolus. It catalyses the reaction adenosine(1779)/adenosine(1780) in 18S rRNA + 4 S-adenosyl-L-methionine = N(6)-dimethyladenosine(1779)/N(6)-dimethyladenosine(1780) in 18S rRNA + 4 S-adenosyl-L-homocysteine + 4 H(+). Specifically dimethylates two adjacent adenosines in the loop of a conserved hairpin near the 3'-end of 18S rRNA in the 40S particle. Involved in the pre-rRNA processing steps leading to small-subunit rRNA production independently of its RNA-modifying catalytic activity. Part of the small subunit (SSU) processome, first precursor of the small eukaryotic ribosomal subunit. During the assembly of the SSU processome in the nucleolus, many ribosome biogenesis factors, an RNA chaperone and ribosomal proteins associate with the nascent pre-rRNA and work in concert to generate RNA folding, modifications, rearrangements and cleavage as well as targeted degradation of pre-ribosomal RNA by the RNA exosome. This chain is Probable dimethyladenosine transferase, found in Caenorhabditis elegans.